A 235-amino-acid polypeptide reads, in one-letter code: MTDLKASEGDLSDYYMRLKKIFSNETRLQSREASISKRSSRVHKNILSAKEAIERQERDFGKLQKVLLNRNQELERRFTLGEALAQQLEVTRQRNADMEAQLLRHTTEGRQRSNELMECMHSLKQATGTYINHEAFPARLNGVSVVRADDGDIKLIPFSLDGNDADGLHTLWRSLHTRTDNASKWRKLISDQEVAGASPVTPSGSERPKATSKHSNFMPTSIIEIDLTSPTNDAS.

Residues 44–106 adopt a coiled-coil conformation; sequence KNILSAKEAI…DMEAQLLRHT (63 aa). A disordered region spans residues 193-216; sequence EVAGASPVTPSGSERPKATSKHSN.

It belongs to the SPC25 family. In terms of assembly, component of the Ndc80 complex, which is composed of Ndc80, Nuf2 and Spc25.

It is found in the nucleus. The protein localises to the chromosome. It localises to the centromere. Its subcellular location is the kinetochore. In terms of biological role, acts as a component of the essential kinetochore-associated Ndc80 complex, which is required for chromosome segregation and spindle checkpoint activity during meiosis and mitosis. Required for kinetochore integrity and the organization of stable microtubule binding sites in the outer plate of the kinetochore. Participates in SAC signaling that responds specifically to disruptions in spindle microtubule dynamics. The NDC80 complex synergistically enhances the affinity of the SKA1 complex for microtubules and may allow the NDC80 complex to track depolymerizing microtubules. The protein is Kinetochore protein Spc25 of Drosophila pseudoobscura pseudoobscura (Fruit fly).